The following is a 599-amino-acid chain: Aspartate--tRNA(Asp/Asn) ligase (599 aa).

Glutamate 183 is an L-aspartate binding site. The interval 207–210 (QIFK) is aspartate. Arginine 229 is an L-aspartate binding site. ATP contacts are provided by residues 229–231 (RDE) and glutamine 238. An L-aspartate-binding site is contributed by histidine 456. Glutamate 490 contributes to the ATP binding site. Residue arginine 497 participates in L-aspartate binding. Residue 542–545 (GLDR) participates in ATP binding.

The protein belongs to the class-II aminoacyl-tRNA synthetase family. Type 1 subfamily. In terms of assembly, homodimer.

The protein localises to the cytoplasm. It carries out the reaction tRNA(Asx) + L-aspartate + ATP = L-aspartyl-tRNA(Asx) + AMP + diphosphate. Aspartyl-tRNA synthetase with relaxed tRNA specificity since it is able to aspartylate not only its cognate tRNA(Asp) but also tRNA(Asn). Reaction proceeds in two steps: L-aspartate is first activated by ATP to form Asp-AMP and then transferred to the acceptor end of tRNA(Asp/Asn). The sequence is that of Aspartate--tRNA(Asp/Asn) ligase from Protochlamydia amoebophila (strain UWE25).